The sequence spans 121 residues: Holo-[acyl-carrier-protein] synthase (121 aa).

Mg(2+)-binding residues include D6 and E55.

Belongs to the P-Pant transferase superfamily. AcpS family. Mg(2+) is required as a cofactor.

It is found in the cytoplasm. It carries out the reaction apo-[ACP] + CoA = holo-[ACP] + adenosine 3',5'-bisphosphate + H(+). Its function is as follows. Transfers the 4'-phosphopantetheine moiety from coenzyme A to a Ser of acyl-carrier-protein. The sequence is that of Holo-[acyl-carrier-protein] synthase from Chloroherpeton thalassium (strain ATCC 35110 / GB-78).